Here is a 68-residue protein sequence, read N- to C-terminus: Alpha/kappa-conotoxin-like pl14.2 (68 aa).

Residues 1-27 (MPSVRSVTCCCLLWMMFSVQLVTPGSP) form the signal peptide. A propeptide spanning residues 28 to 39 (ATAQLSGQRTAR) is cleaved from the precursor. Intrachain disulfides connect Cys46–Cys61 and Cys50–Cys63. Position 64 is an arginine amide (Arg64). The propeptide occupies 65-68 (GKRD).

It belongs to the conotoxin J superfamily. Expressed by the venom duct.

It is found in the secreted. Highly inhibits both nicotinic acetylcholine receptors (neuronal (alpha-3/beta-4) and muscular (alpha-1/beta-1/epsilon/delta) subtypes) and the voltage-gated potassium channel Kv1.6/KCNA6 subtype. In Conus planorbis (Planorbis cone), this protein is Alpha/kappa-conotoxin-like pl14.2.